Here is a 484-residue protein sequence, read N- to C-terminus: Aldehyde dehydrogenase family 3 member F1 (484 aa).

192-197 contributes to the NAD(+) binding site; sequence GSPKIG. The Proton acceptor role is filled by E214. C252 serves as the catalytic Nucleophile.

The protein belongs to the aldehyde dehydrogenase family. As to quaternary structure, homotetramer. As to expression, constituively expressed at low levels.

It carries out the reaction an aldehyde + NAD(+) + H2O = a carboxylate + NADH + 2 H(+). This chain is Aldehyde dehydrogenase family 3 member F1 (ALDH3F1), found in Arabidopsis thaliana (Mouse-ear cress).